Here is a 63-residue protein sequence, read N- to C-terminus: uncharacterized protein (63 aa).

The helical transmembrane segment at 4-24 (LNQFILIFLLLIVILFIFFLI) threads the bilayer.

The protein resides in the membrane. This is an uncharacterized protein from Invertebrate iridescent virus 6 (IIV-6).